We begin with the raw amino-acid sequence, 352 residues long: Phenylalanine--tRNA ligase alpha subunit (352 aa).

Glu258 provides a ligand contact to Mg(2+).

This sequence belongs to the class-II aminoacyl-tRNA synthetase family. Phe-tRNA synthetase alpha subunit type 1 subfamily. Tetramer of two alpha and two beta subunits. Mg(2+) serves as cofactor.

Its subcellular location is the cytoplasm. It catalyses the reaction tRNA(Phe) + L-phenylalanine + ATP = L-phenylalanyl-tRNA(Phe) + AMP + diphosphate + H(+). The chain is Phenylalanine--tRNA ligase alpha subunit from Staphylococcus aureus (strain NCTC 8325 / PS 47).